The chain runs to 648 residues: SRSF protein kinase 1 (648 aa).

Positions 1–57 (MERKVLALQARKKRTKAKKDKAQRKPETQHRGSAPHSESDIPEQEEEILGSDDDEQE) are disordered. The segment covering 10–22 (ARKKRTKAKKDKA) has biased composition (basic residues). Acidic residues predominate over residues 40–57 (DIPEQEEEILGSDDDEQE). Serine 51 carries the post-translational modification Phosphoserine. The Protein kinase domain maps to 80–646 (YHVIRKLGWG…AAECLRHPWL (567 aa)). ATP-binding positions include 86–94 (LGWGHFSTV) and lysine 109. The Proton acceptor role is filled by aspartate 213. Disordered stretches follow at residues 238–354 (WQRS…APEI) and 395–464 (PSFL…DSKG). Over residues 265–276 (KNKKKKLKKKQK) the composition is skewed to basic residues. Basic and acidic residues-rich tracts occupy residues 277 to 288 (RQAELLEKRMQE) and 304 to 317 (NKQE…DRPL). Serine 309, serine 311, and serine 333 each carry phosphoserine. Composition is skewed to polar residues over residues 333 to 343 (SNSIGQDQTLT) and 396 to 441 (SFLN…TQLE). Threonine 448 is modified (phosphothreonine). Residue serine 450 is modified to Phosphoserine. Serine 548 carries the phosphoserine; by CK2 modification.

Belongs to the protein kinase superfamily. CMGC Ser/Thr protein kinase family. In terms of assembly, monomer. Found in a multisubunit complex containing seven proteins, named toposome, which separates entangled circular chromatin DNA during chromosome segregation. Interacts with HHV-1 ICP27 protein. Interacts with DNAJC8 and AHSA1/AHA1 and this mediates formation of a complex with the Hsp70 /Hsp90 machinery. Binds to IGF2BP1, SYNCRIP, HNRNPA2B1 and HNRNPC. Interacts with SAFB/SAFB1 and SAFB2 which inhibits its activity. It depends on Mg(2+) as a cofactor. As to expression, predominantly expressed in the testis but is also present at lower levels in heart, spleen, liver, brain, kidney, lung and skeletal muscle. Present in all germinal cells in the seminiferous tubules but not in mature spermatozoa.

The protein localises to the cytoplasm. Its subcellular location is the nucleus. The protein resides in the nucleoplasm. It is found in the nucleus matrix. It localises to the microsome. The protein localises to the nucleus speckle. Its subcellular location is the chromosome. The catalysed reaction is L-seryl-[protein] + ATP = O-phospho-L-seryl-[protein] + ADP + H(+). It carries out the reaction L-threonyl-[protein] + ATP = O-phospho-L-threonyl-[protein] + ADP + H(+). Activated by phosphorylation on Ser-51 and Ser-548. Serine/arginine-rich protein-specific kinase which specifically phosphorylates its substrates at serine residues located in regions rich in arginine/serine dipeptides, known as RS domains and is involved in the phosphorylation of SR splicing factors and the regulation of splicing. Plays a central role in the regulatory network for splicing, controlling the intranuclear distribution of splicing factors in interphase cells and the reorganization of nuclear speckles during mitosis. Can influence additional steps of mRNA maturation, as well as other cellular activities, such as chromatin reorganization in somatic and sperm cells and cell cycle progression. Phosphorylates SFRS2, ZRSR2, LBR and PRM1. Phosphorylates SRSF1 using a directional (C-terminal to N-terminal) and a dual-track mechanism incorporating both processive phosphorylation (in which the kinase stays attached to the substrate after each round of phosphorylation) and distributive phosphorylation steps (in which the kinase and substrate dissociate after each phosphorylation event). The RS domain of SRSF1 binds first to a docking groove in the large lobe of the kinase domain of SRPK1. This induces certain structural changes in SRPK1 and/or RRM2 domain of SRSF1, allowing RRM2 to bind the kinase and initiate phosphorylation. The cycles continue for several phosphorylation steps in a processive manner (steps 1-8) until the last few phosphorylation steps (approximately steps 9-12). During that time, a mechanical stress induces the unfolding of the beta-4 motif in RRM2, which then docks at the docking groove of SRPK1. This also signals RRM2 to begin to dissociate, which facilitates SRSF1 dissociation after phosphorylation is completed. Can mediate hepatitis B virus (HBV) core protein phosphorylation. It plays a negative role in the regulation of HBV replication through a mechanism not involving the phosphorylation of the core protein but by reducing the packaging efficiency of the pregenomic RNA (pgRNA) without affecting the formation of the viral core particles. Can induce splicing of exon 10 in MAPT/TAU. This chain is SRSF protein kinase 1, found in Mus musculus (Mouse).